The sequence spans 237 residues: ADTIVAVELDSYPNTDIGDPSYPHIGIDIKSIRSKSTARWNMQTGKVGTAHISYNSVAKRLSAVVSYTGSSSTTVSYDVDLNNVLPEWVRVGLSATTGLYKETNTILSWSFTSKLKTNSIADANSLHFSFNQFSQNPKDLILQSDATTDSDGNLELTKVSSSGDPQGSSVGRALFYAPVHIWEKSAVVAGFDATFTFLIKSPDRDPADGITFFIANTDTSIPSGSGGRLLGLFPDAN.

Mn(2+) contacts are provided by Glu-8 and Asp-10. Residues Asp-10, Tyr-12, Asn-14, and Asp-19 each coordinate Ca(2+). A carbohydrate is bound at residue Tyr-12. Positions 19, 24, and 34 each coordinate Mn(2+). Residue 99 to 100 (LY) participates in a carbohydrate binding. Position 208 (Asp-208) interacts with Ca(2+). Arg-228 provides a ligand contact to a carbohydrate.

This sequence belongs to the leguminous lectin family. Equilibrium between homodimer and homotetramer. Oligomerization is pH-dependent with homotetramers forming at pH 6.5 and above. The beta and gamma chains are produced by partial proteolytic processing of the lectin alpha chain by an asparaginyl endopeptidase. Mixture of 60% alpha lectin and 40% of its beta and gamma proteolytic fragments.

In terms of biological role, D-mannose/D-glucose-binding lectin. Has anti-inflammatory activity in rats. Induces histamine release in mast cells from rat. Induces lymphocyte proliferation and IFNG production. The protein is Lectin alpha chain of Dioclea guianensis.